The following is an 89-amino-acid chain: Small ribosomal subunit protein uS14A (89 aa).

This sequence belongs to the universal ribosomal protein uS14 family. Part of the 30S ribosomal subunit. Contacts proteins S3 and S10.

Its function is as follows. Binds 16S rRNA, required for the assembly of 30S particles and may also be responsible for determining the conformation of the 16S rRNA at the A site. The polypeptide is Small ribosomal subunit protein uS14A (Levilactobacillus brevis (strain ATCC 367 / BCRC 12310 / CIP 105137 / JCM 1170 / LMG 11437 / NCIMB 947 / NCTC 947) (Lactobacillus brevis)).